The primary structure comprises 603 residues: DNA mismatch repair protein MutL (603 aa).

Residues 336 to 346 (EVSKKQKEQQK) show a composition bias toward basic and acidic residues. The disordered stretch occupies residues 336-372 (EVSKKQKEQQKSEQIQMSFEENRQPKEPPTLFSKPNI).

Belongs to the DNA mismatch repair MutL/HexB family.

Its function is as follows. This protein is involved in the repair of mismatches in DNA. It is required for dam-dependent methyl-directed DNA mismatch repair. May act as a 'molecular matchmaker', a protein that promotes the formation of a stable complex between two or more DNA-binding proteins in an ATP-dependent manner without itself being part of a final effector complex. This chain is DNA mismatch repair protein MutL, found in Listeria innocua serovar 6a (strain ATCC BAA-680 / CLIP 11262).